Here is an 876-residue protein sequence, read N- to C-terminus: Alanine--tRNA ligase (876 aa).

The Zn(2+) site is built by histidine 560, histidine 564, cysteine 662, and histidine 666.

This sequence belongs to the class-II aminoacyl-tRNA synthetase family. Zn(2+) serves as cofactor.

It localises to the cytoplasm. The catalysed reaction is tRNA(Ala) + L-alanine + ATP = L-alanyl-tRNA(Ala) + AMP + diphosphate. Functionally, catalyzes the attachment of alanine to tRNA(Ala) in a two-step reaction: alanine is first activated by ATP to form Ala-AMP and then transferred to the acceptor end of tRNA(Ala). Also edits incorrectly charged Ser-tRNA(Ala) and Gly-tRNA(Ala) via its editing domain. In Synechococcus sp. (strain ATCC 27144 / PCC 6301 / SAUG 1402/1) (Anacystis nidulans), this protein is Alanine--tRNA ligase.